Here is a 193-residue protein sequence, read N- to C-terminus: DNA damage-inducible transcript 4-like protein (193 aa).

It belongs to the DDIT4 family.

It localises to the cytoplasm. Its function is as follows. Inhibits cell growth by regulating the TOR signaling pathway upstream of the TSC1-TSC2 complex and downstream of AKT1. This Bos taurus (Bovine) protein is DNA damage-inducible transcript 4-like protein (DDIT4L).